The primary structure comprises 246 residues: tRNA (guanine-N(1)-)-methyltransferase (246 aa).

S-adenosyl-L-methionine is bound by residues Gly-114 and 134–139 (IGDYIL).

Belongs to the RNA methyltransferase TrmD family. As to quaternary structure, homodimer.

The protein localises to the cytoplasm. It carries out the reaction guanosine(37) in tRNA + S-adenosyl-L-methionine = N(1)-methylguanosine(37) in tRNA + S-adenosyl-L-homocysteine + H(+). In terms of biological role, specifically methylates guanosine-37 in various tRNAs. In Coxiella burnetii (strain CbuG_Q212) (Coxiella burnetii (strain Q212)), this protein is tRNA (guanine-N(1)-)-methyltransferase.